A 205-amino-acid polypeptide reads, in one-letter code: Golgi apparatus membrane protein TVP23 homolog B (205 aa).

M1 is subject to N-acetylmethionine. A disordered region spans residues M1–E21. 4 helical membrane-spanning segments follow: residues P34–L53, C54–L72, I126–L146, and K152–I172.

Belongs to the TVP23 family.

Its subcellular location is the membrane. The protein is Golgi apparatus membrane protein TVP23 homolog B (TVP23B) of Pongo abelii (Sumatran orangutan).